Consider the following 665-residue polypeptide: MVYSNNDVIQDFGSDLRYLKLLSKEFPTIASASTEIINLQAILNLPKGTEHFLSDIHGEYESFNHVLKNGSGNIKRKIIEVFGDLLSETEIKSLATLIYYPEQKLDLIHKKEENIEEWYKVTISRLVEVCRKAAFKYTRMKVRKALPKDFAYIIEELMHRGPKELDKEEYYNEIIETIIRIGRADEFIIEMSKLIQRLVIDRLHIVGDIFDRGPGPDIVMDTLLNYHSVDIQWGNHDVLWMGSAAGSEACIATLIRICATYSNLNTIEDGYGINLLPLATFALDFYKDDDCTAFKPKIKSDIIYTENDLKLIAKMHKAISIIQFKLEGEIINRRPHFSMEDRLLLNKINYEDGTVDIDGKIYKLKDSNFPTINPKNPYKLTIEEKELMEKLKSSFLNSEKLQRHVRFLFSNGSMYLKFNSNLMYHGGIPMNEDGSFKKVTIDSSGISYSGKAYFDRLEILVREAYFRKNNPIAKQHGMDITWYLWTGPDSPLFGKDKMTTFERYFINDKETHVEKKDPYFKLEDNEKMCRIIFEEFGLNPDVSHIINGHVPVKLKEGESPIRANGKLLVIDGGFSRTYQGTTGIAGYTLIYNSYGLLLVSHDPFESTQKAIEEEKDIHSTTMVLEKEVERKRVRDTDDGEKLKFQVKDLEMLLDAYRSGLIKEQR.

The protein belongs to the FBPase class 3 family. It depends on Mn(2+) as a cofactor.

It carries out the reaction beta-D-fructose 1,6-bisphosphate + H2O = beta-D-fructose 6-phosphate + phosphate. Its pathway is carbohydrate biosynthesis; gluconeogenesis. This chain is Fructose-1,6-bisphosphatase class 3, found in Alkaliphilus metalliredigens (strain QYMF).